The sequence spans 186 residues: Ribosome-recycling factor (186 aa).

This sequence belongs to the RRF family.

Its subcellular location is the cytoplasm. Responsible for the release of ribosomes from messenger RNA at the termination of protein biosynthesis. May increase the efficiency of translation by recycling ribosomes from one round of translation to another. The sequence is that of Ribosome-recycling factor from Nitratiruptor sp. (strain SB155-2).